The primary structure comprises 289 residues: NAD kinase (289 aa).

Asp82 functions as the Proton acceptor in the catalytic mechanism. Residues 82-83 (DG), Arg87, 150-151 (NE), Lys161, Arg178, Asp180, 191-196 (TAYAMS), Ala215, and Gln250 contribute to the NAD(+) site.

It belongs to the NAD kinase family. The cofactor is a divalent metal cation.

It localises to the cytoplasm. It carries out the reaction NAD(+) + ATP = ADP + NADP(+) + H(+). Involved in the regulation of the intracellular balance of NAD and NADP, and is a key enzyme in the biosynthesis of NADP. Catalyzes specifically the phosphorylation on 2'-hydroxyl of the adenosine moiety of NAD to yield NADP. The sequence is that of NAD kinase from Methanosarcina mazei (strain ATCC BAA-159 / DSM 3647 / Goe1 / Go1 / JCM 11833 / OCM 88) (Methanosarcina frisia).